We begin with the raw amino-acid sequence, 220 residues long: Deoxyribose-phosphate aldolase 1 (220 aa).

Asp89 acts as the Proton donor/acceptor in catalysis. The active-site Schiff-base intermediate with acetaldehyde is the Lys151. The Proton donor/acceptor role is filled by Lys180.

This sequence belongs to the DeoC/FbaB aldolase family. DeoC type 1 subfamily.

The protein resides in the cytoplasm. It catalyses the reaction 2-deoxy-D-ribose 5-phosphate = D-glyceraldehyde 3-phosphate + acetaldehyde. The protein operates within carbohydrate degradation; 2-deoxy-D-ribose 1-phosphate degradation; D-glyceraldehyde 3-phosphate and acetaldehyde from 2-deoxy-alpha-D-ribose 1-phosphate: step 2/2. Functionally, catalyzes a reversible aldol reaction between acetaldehyde and D-glyceraldehyde 3-phosphate to generate 2-deoxy-D-ribose 5-phosphate. The sequence is that of Deoxyribose-phosphate aldolase 1 from Staphylococcus aureus (strain bovine RF122 / ET3-1).